A 427-amino-acid polypeptide reads, in one-letter code: Acetyl-CoA acetyltransferase, mitochondrial (427 aa).

Residues 1–33 (MAVLAALLRSGARSRSPLLRRLVQEIRYVERSY) constitute a mitochondrion transit peptide. N6-acetyllysine; alternate is present on Lys66. An N6-succinyllysine; alternate modification is found at Lys66. Lys78 carries the N6-succinyllysine modification. Residue Cys126 is the Acyl-thioester intermediate of the active site. N6-acetyllysine; alternate occurs at positions 174, 181, 190, and 202. An N6-succinyllysine; alternate mark is found at Lys174, Lys181, Lys190, and Lys202. Tyr219 contributes to the CoA binding site. Position 219 (Tyr219) interacts with K(+). Lys223 and Lys230 each carry N6-acetyllysine; alternate. N6-succinyllysine; alternate occurs at positions 223 and 230. Lys243 is subject to N6-succinyllysine. Lys251 and Lys257 each carry N6-acetyllysine. Residues 258 to 260 (RVD) and Lys263 contribute to the CoA site. The residue at position 263 (Lys263) is an N6-acetyllysine; alternate. Lys263 carries the N6-succinyllysine; alternate modification. Lys266 and Lys268 each carry N6-succinyllysine. Lys273 bears the N6-acetyllysine mark. K(+) is bound by residues Ala280, Ala281, and Ala283. Ser284 provides a ligand contact to CoA. Residue Lys338 is modified to N6-acetyllysine. Val381 serves as a coordination point for K(+). Cys413 serves as the catalytic Proton donor/acceptor.

Belongs to the thiolase-like superfamily. Thiolase family. As to quaternary structure, homotetramer. Succinylation at Lys-268, adjacent to a coenzyme A binding site. Desuccinylated by SIRT5.

Its subcellular location is the mitochondrion. The enzyme catalyses 2 acetyl-CoA = acetoacetyl-CoA + CoA. The catalysed reaction is propanoyl-CoA + acetyl-CoA = 2-methyl-3-oxobutanoyl-CoA + CoA. It participates in lipid metabolism; fatty acid beta-oxidation. With respect to regulation, activated by potassium ions, but not sodium ions. Functionally, this is one of the enzymes that catalyzes the last step of the mitochondrial beta-oxidation pathway, an aerobic process breaking down fatty acids into acetyl-CoA. Using free coenzyme A/CoA, catalyzes the thiolytic cleavage of medium- to long-chain 3-oxoacyl-CoAs into acetyl-CoA and a fatty acyl-CoA shortened by two carbon atoms. The activity of the enzyme is reversible and it can also catalyze the condensation of two acetyl-CoA molecules into acetoacetyl-CoA. Thereby, it plays a major role in ketone body metabolism. In Homo sapiens (Human), this protein is Acetyl-CoA acetyltransferase, mitochondrial (ACAT1).